The following is a 476-amino-acid chain: Ribosomal RNA small subunit methyltransferase F (476 aa).

Residues 124–130 (ASAPGSK), E148, D175, and D193 each bind S-adenosyl-L-methionine. C246 serves as the catalytic Nucleophile.

The protein belongs to the class I-like SAM-binding methyltransferase superfamily. RsmB/NOP family.

It localises to the cytoplasm. The enzyme catalyses cytidine(1407) in 16S rRNA + S-adenosyl-L-methionine = 5-methylcytidine(1407) in 16S rRNA + S-adenosyl-L-homocysteine + H(+). In terms of biological role, specifically methylates the cytosine at position 1407 (m5C1407) of 16S rRNA. This Photobacterium profundum (strain SS9) protein is Ribosomal RNA small subunit methyltransferase F.